The chain runs to 433 residues: Isocitrate dehydrogenase [NADP], chloroplastic (433 aa).

Residues 1–21 (QFSPNLSFSAFFPIITFTTAT) constitute a chloroplast transit peptide. Residues 98-100 (TIT) and Arg105 each bind NADP(+). Residue Thr100 participates in substrate binding. Substrate-binding positions include 117 to 123 (SPNGTIR), Arg132, and Arg155. A Mn(2+)-binding site is contributed by Asp275. Lys283 is a binding site for NADP(+). Asp298 provides a ligand contact to Mn(2+). Residues 333–338 (GTVTRH) and Asn351 contribute to the NADP(+) site.

The protein belongs to the isocitrate and isopropylmalate dehydrogenases family. Mg(2+) is required as a cofactor. Mn(2+) serves as cofactor. Detected in all tissues examined.

It is found in the plastid. The protein resides in the chloroplast. It catalyses the reaction D-threo-isocitrate + NADP(+) = 2-oxoglutarate + CO2 + NADPH. The sequence is that of Isocitrate dehydrogenase [NADP], chloroplastic from Medicago sativa (Alfalfa).